A 109-amino-acid polypeptide reads, in one-letter code: CRISPR-associated endoribonuclease Cas2 (109 aa).

A Mg(2+)-binding site is contributed by D8.

It belongs to the CRISPR-associated endoribonuclease Cas2 protein family. Homodimer, forms a heterotetramer with a Cas1 homodimer. Mg(2+) is required as a cofactor.

CRISPR (clustered regularly interspaced short palindromic repeat), is an adaptive immune system that provides protection against mobile genetic elements (viruses, transposable elements and conjugative plasmids). CRISPR clusters contain sequences complementary to antecedent mobile elements and target invading nucleic acids. CRISPR clusters are transcribed and processed into CRISPR RNA (crRNA). Functions as a ssRNA-specific endoribonuclease. Involved in the integration of spacer DNA into the CRISPR cassette. This Streptococcus mutans serotype c (strain ATCC 700610 / UA159) protein is CRISPR-associated endoribonuclease Cas2.